The following is a 392-amino-acid chain: MTQTANAAKKTTSTKASAAKEAKVKVTAEEKAVTEVKKPAAKKKSALAFPFTAIVGQEEMKLSLILNIIDPRIGGVLVMGHRGTGKSTTVRALAEVLPLIPRVKGDIYNRTVEQYIEMEAAGKGAPAIKPEDVETELIPVPVVDLPLGATEDRVCGTIDIEKALTSGVKAFEPGLLAQSNRGFLYIDEVNLLDDHLVDVLLDVAASGKNVVEREGISIRHPARFVLVGSGNPEEGELRPQLLDRFGLHARITTINDVAKRVQIVKLRREFDEDPEAFMKKVSREQQKLRKKIVAAQQLLPQVTMDDAVLTDIAKLCMNLGIDGHRGELTITRTAHAYAAWEGDKKVTMKHVREIAGLCLRHRLRKDPLETVDAGEKIDRELAKVLGEAEAAA.

Residues 1–17 (MTQTANAAKKTTSTKAS) show a composition bias toward low complexity. Positions 1–21 (MTQTANAAKKTTSTKASAAKE) are disordered. 80-87 (GHRGTGKS) contacts ATP.

Belongs to the Mg-chelatase subunits D/I family.

It carries out the reaction protoporphyrin IX + Mg(2+) + ATP + H2O = Mg-protoporphyrin IX + ADP + phosphate + 3 H(+). The protein operates within porphyrin-containing compound metabolism; bacteriochlorophyll biosynthesis. Involved in bacteriochlorophyll biosynthesis; introduces a magnesium ion into protoporphyrin IX to yield Mg-protoporphyrin IX. In Chlorobaculum tepidum (strain ATCC 49652 / DSM 12025 / NBRC 103806 / TLS) (Chlorobium tepidum), this protein is Magnesium-chelatase 38 kDa subunit (bchI).